Here is a 509-residue protein sequence, read N- to C-terminus: Aspartyl/glutamyl-tRNA(Asn/Gln) amidotransferase subunit B (509 aa).

The protein belongs to the GatB/GatE family. GatB subfamily. In terms of assembly, heterotrimer of A, B and C subunits.

It catalyses the reaction L-glutamyl-tRNA(Gln) + L-glutamine + ATP + H2O = L-glutaminyl-tRNA(Gln) + L-glutamate + ADP + phosphate + H(+). The catalysed reaction is L-aspartyl-tRNA(Asn) + L-glutamine + ATP + H2O = L-asparaginyl-tRNA(Asn) + L-glutamate + ADP + phosphate + 2 H(+). Functionally, allows the formation of correctly charged Asn-tRNA(Asn) or Gln-tRNA(Gln) through the transamidation of misacylated Asp-tRNA(Asn) or Glu-tRNA(Gln) in organisms which lack either or both of asparaginyl-tRNA or glutaminyl-tRNA synthetases. The reaction takes place in the presence of glutamine and ATP through an activated phospho-Asp-tRNA(Asn) or phospho-Glu-tRNA(Gln). The polypeptide is Aspartyl/glutamyl-tRNA(Asn/Gln) amidotransferase subunit B (Psychrobacter cryohalolentis (strain ATCC BAA-1226 / DSM 17306 / VKM B-2378 / K5)).